Reading from the N-terminus, the 461-residue chain is Cysteine--tRNA ligase (461 aa).

Cys28 serves as a coordination point for Zn(2+). Positions 30-40 (ITIYDLCHIGH) match the 'HIGH' region motif. Zn(2+) contacts are provided by Cys209, His234, and Glu238. A 'KMSKS' region motif is present at residues 266–270 (KMSKS). Lys269 serves as a coordination point for ATP.

The protein belongs to the class-I aminoacyl-tRNA synthetase family. Monomer. Zn(2+) serves as cofactor.

It is found in the cytoplasm. It carries out the reaction tRNA(Cys) + L-cysteine + ATP = L-cysteinyl-tRNA(Cys) + AMP + diphosphate. The protein is Cysteine--tRNA ligase of Yersinia pestis bv. Antiqua (strain Antiqua).